Consider the following 316-residue polypeptide: 4-diphosphocytidyl-2-C-methyl-D-erythritol kinase (316 aa).

Lysine 11 is an active-site residue. Residue 99–109 participates in ATP binding; the sequence is PVAAGLAGGST. The active site involves aspartate 141.

The protein belongs to the GHMP kinase family. IspE subfamily.

It catalyses the reaction 4-CDP-2-C-methyl-D-erythritol + ATP = 4-CDP-2-C-methyl-D-erythritol 2-phosphate + ADP + H(+). It participates in isoprenoid biosynthesis; isopentenyl diphosphate biosynthesis via DXP pathway; isopentenyl diphosphate from 1-deoxy-D-xylulose 5-phosphate: step 3/6. Functionally, catalyzes the phosphorylation of the position 2 hydroxy group of 4-diphosphocytidyl-2C-methyl-D-erythritol. The protein is 4-diphosphocytidyl-2-C-methyl-D-erythritol kinase of Gloeothece citriformis (strain PCC 7424) (Cyanothece sp. (strain PCC 7424)).